An 895-amino-acid chain; its full sequence is Cellulose 1,4-beta-cellobiosidase (895 aa).

The first 27 residues, 1 to 27 (MNFRRMLCAAIVLTIVLSIMLPSTVFA), serve as a signal peptide directing secretion. The CBM-cenC domain occupies 40-199 (NDLLYERTFD…YLDDVSLYDP (160 aa)). The interval 199 to 240 (PRFVKPVEYVLPQPDVRVNQVGYLPFAKKYATVVSSSTSPLK) is linker. The interval 241 to 815 (WQLLNSANQV…WVTAYLDEID (575 aa)) is catalytic. D386 functions as the Nucleophile in the catalytic mechanism. Residues H737, D786, and E795 contribute to the active site. Positions 828–894 (PEVIYGDCNG…ILKEIDVLPH (67 aa)) constitute a Dockerin domain.

This sequence belongs to the glycosyl hydrolase 9 (cellulase E) family.

The protein localises to the secreted. It catalyses the reaction Hydrolysis of (1-&gt;4)-beta-D-glucosidic linkages in cellulose and cellotetraose, releasing cellobiose from the non-reducing ends of the chains.. Inhibited by cellobiose. This is Cellulose 1,4-beta-cellobiosidase (celK) from Acetivibrio thermocellus (Hungateiclostridium thermocellum).